A 493-amino-acid chain; its full sequence is MFS-type transporter efuF (493 aa).

The next 11 helical transmembrane spans lie at 90-110 (ITLV…NMLL), 117-137 (IMLP…CAVH), 147-167 (LLMG…LTTF), 179-199 (IFYG…YGVF), 211-231 (FLMI…YWHL), 279-299 (IALY…VGNF), 316-336 (LYTV…CTSS), 343-363 (STHL…LITL), 370-390 (GPTY…SCIF), 406-426 (AVTG…SLAF), and 435-455 (IPAL…VLGF).

Belongs to the major facilitator superfamily.

Its subcellular location is the membrane. Its function is as follows. MFS-type transporter; part of the gene cluster that mediates the biosynthesis of enfumafungin, a glycosylated fernene-type triterpenoid with potent antifungal activity, mediated by its interaction with beta-1,3-glucan synthase and the fungal cell wall. Might facilitate the transport of glucose units to the subcellular site of enfumafungin biosynthesis. The chain is MFS-type transporter efuF from Hormonema carpetanum.